Here is a 451-residue protein sequence, read N- to C-terminus: Tubulin alpha-1A chain (451 aa).

Positions 10, 11, 12, and 15 each coordinate GTP. Lys-40 bears the N6-acetyllysine mark. 13 residues coordinate GTP: Glu-71, Ala-99, Ser-140, Gly-143, Gly-144, Thr-145, Gly-146, Thr-179, Glu-183, Asn-206, Tyr-224, Asn-228, and Leu-252. Glu-71 contacts Mg(2+). Residue Glu-254 is part of the active site. Tyr-282 bears the 3'-nitrotyrosine mark. At Ser-439 the chain carries Phosphoserine. A 5-glutamyl polyglutamate mark is found at Glu-443 and Glu-445. Tyr-451 is modified (3'-nitrotyrosine).

It belongs to the tubulin family. In terms of assembly, heterodimer of alpha- and beta-tubulin. A typical microtubule is a hollow water-filled tube with an outer diameter of 25 nm and an inner diameter of 15 nM. Alpha-beta heterodimers associate head-to-tail to form protofilaments running lengthwise along the microtubule wall with the beta-tubulin subunit facing the microtubule plus end conferring a structural polarity. Microtubules usually have 13 protofilaments but different protofilament numbers can be found in some organisms and specialized cells. Interacts with gamma-tubulin; the interaction allows microtubules to nucleate from the gamma-tubulin ring complex (gTuRC). Nascent microtubule interacts (via alpha-tubulin MREC motif) with TTC5/STRAP; this interaction may result in tubulin mRNA-targeted degradation. Component of sperm flagellar doublet microtubules. The cofactor is Mg(2+). Some glutamate residues at the C-terminus are polyglycylated, resulting in polyglycine chains on the gamma-carboxyl group. Glycylation is mainly limited to tubulin incorporated into axonemes (cilia and flagella) whereas glutamylation is prevalent in neuronal cells, centrioles, axonemes, and the mitotic spindle. Both modifications can coexist on the same protein on adjacent residues, and lowering polyglycylation levels increases polyglutamylation, and reciprocally. Cilia and flagella glycylation is required for their stability and maintenance. Flagella glycylation controls sperm motility. In terms of processing, some glutamate residues at the C-terminus are polyglutamylated, resulting in polyglutamate chains on the gamma-carboxyl group. Polyglutamylation plays a key role in microtubule severing by spastin (SPAST). SPAST preferentially recognizes and acts on microtubules decorated with short polyglutamate tails: severing activity by SPAST increases as the number of glutamates per tubulin rises from one to eight, but decreases beyond this glutamylation threshold. Glutamylation is also involved in cilia motility. Post-translationally, acetylation of alpha chains at Lys-40 is located inside the microtubule lumen. This modification has been correlated with increased microtubule stability, intracellular transport and ciliary assembly. Methylation of alpha chains at Lys-40 is found in mitotic microtubules and is required for normal mitosis and cytokinesis contributing to genomic stability. In terms of processing, nitration of Tyr-451 is irreversible and interferes with normal dynein intracellular distribution. Post-translationally, undergoes a tyrosination/detyrosination cycle, the cyclic removal and re-addition of a C-terminal tyrosine residue by the enzymes tubulin tyrosine carboxypeptidase (MATCAP1, VASH1 or VASH2) and tubulin tyrosine ligase (TTL), respectively. Tyrosination promotes microtubule interaction with CAP-Gly domain-containing proteins such as CLIP1, CLIP2 and DCTN1. Tyrosination regulates the initiation of dynein-dynactin motility via interaction with DCTN1, which brings the dynein-dynactin complex into contact with microtubules. In neurons, tyrosinated tubulins mediate the initiation of retrograde vesicle transport. In terms of processing, detyrosination is involved in metaphase plate congression by guiding chromosomes during mitosis: detyrosination promotes interaction with CENPE, promoting pole-proximal transport of chromosomes toward the equator. Detyrosination increases microtubules-dependent mechanotransduction in dystrophic cardiac and skeletal muscle. In cardiomyocytes, detyrosinated microtubules are required to resist to contractile compression during contraction: detyrosination promotes association with desmin (DES) at force-generating sarcomeres, leading to buckled microtubules and mechanical resistance to contraction.

It is found in the cytoplasm. Its subcellular location is the cytoskeleton. The protein localises to the flagellum axoneme. It catalyses the reaction GTP + H2O = GDP + phosphate + H(+). Functionally, tubulin is the major constituent of microtubules, protein filaments consisting of alpha- and beta-tubulin heterodimers. Microtubules grow by the addition of GTP-tubulin dimers to the microtubule end, where a stabilizing cap forms. Below the cap, tubulin dimers are in GDP-bound state, owing to GTPase activity of alpha-tubulin. The polypeptide is Tubulin alpha-1A chain (TUBA1A) (Sus scrofa (Pig)).